Reading from the N-terminus, the 830-residue chain is WD repeat-containing protein 75 (830 aa).

9 WD repeats span residues glutamate 4 to serine 43, glutamate 47 to aspartate 86, glycine 90 to serine 131, lysine 145 to lysine 184, leucine 193 to arginine 231, lysine 237 to arginine 276, threonine 279 to histidine 318, serine 324 to serine 362, and glutamine 376 to methionine 423. Residue lysine 123 forms a Glycyl lysine isopeptide (Lys-Gly) (interchain with G-Cter in SUMO2) linkage. Residue lysine 427 forms a Glycyl lysine isopeptide (Lys-Gly) (interchain with G-Cter in SUMO2) linkage. WD repeat units follow at residues glycine 430–isoleucine 474, glycine 487–aspartate 525, tryptophan 529–asparagine 569, and alanine 574–lysine 611. Lysine 466 is modified (N6-acetyllysine). Residues serine 664 and serine 672 each carry the phosphoserine modification. Lysine 676 participates in a covalent cross-link: Glycyl lysine isopeptide (Lys-Gly) (interchain with G-Cter in SUMO2). The interval serine 763–histidine 806 is disordered. The segment covering glutamate 769 to aspartate 787 has biased composition (acidic residues). 4 positions are modified to phosphoserine: serine 779, serine 782, serine 796, and serine 811.

As to quaternary structure, component of the proposed t-UTP subcomplex of the ribosomal small subunit (SSU) processome. SSU processome is composed of more than 70 proteins and the RNA chaperone small nucleolar RNA (snoRNA) U3.

It localises to the nucleus. Its subcellular location is the nucleolus. Ribosome biogenesis factor. Part of the small subunit (SSU) processome, first precursor of the small eukaryotic ribosomal subunit. During the assembly of the SSU processome in the nucleolus, many ribosome biogenesis factors, an RNA chaperone and ribosomal proteins associate with the nascent pre-rRNA and work in concert to generate RNA folding, modifications, rearrangements and cleavage as well as targeted degradation of pre-ribosomal RNA by the RNA exosome. Involved in nucleolar processing of pre-18S ribosomal RNA. Required for optimal pre-ribosomal RNA transcription by RNA polymerase I. In Homo sapiens (Human), this protein is WD repeat-containing protein 75.